A 259-amino-acid chain; its full sequence is Histidinol-phosphatase (259 aa).

Mg(2+) contacts are provided by E66, D82, I84, D85, and D207. A substrate-binding site is contributed by E66. Residues 84–87 and D207 contribute to the substrate site; that span reads IDGT.

This sequence belongs to the inositol monophosphatase superfamily. Mg(2+) is required as a cofactor.

The catalysed reaction is L-histidinol phosphate + H2O = L-histidinol + phosphate. It functions in the pathway amino-acid biosynthesis; L-histidine biosynthesis; L-histidine from 5-phospho-alpha-D-ribose 1-diphosphate: step 8/9. Its function is as follows. Catalyzes the dephosphorylation of histidinol-phosphate to histidinol, the direct precursor of histidine. This is Histidinol-phosphatase (hisN) from Chlorobaculum parvum (strain DSM 263 / NCIMB 8327) (Chlorobium vibrioforme subsp. thiosulfatophilum).